The sequence spans 304 residues: Type II methyltransferase M.ScaI (304 aa).

The protein belongs to the N(4)/N(6)-methyltransferase family. N(4) subfamily.

The enzyme catalyses a 2'-deoxycytidine in DNA + S-adenosyl-L-methionine = an N(4)-methyl-2'-deoxycytidine in DNA + S-adenosyl-L-homocysteine + H(+). A methylase that recognizes the double-stranded sequence 5'-AGTACT-3', methylates C-5 on both strands, and protects the DNA from cleavage by the ScaI endonuclease. This is Type II methyltransferase M.ScaI from Streptomyces caespitosus.